A 75-amino-acid chain; its full sequence is Brevinin-2SN2 (75 aa).

Residues 1–22 form the signal peptide; sequence MFTMKKSLLFLFFLGTISLSFC. Residues 23–40 constitute a propeptide, removed in mature form; the sequence is EEERGADEDDGGEMTEEE. The cysteines at positions 69 and 75 are disulfide-linked.

The protein belongs to the frog skin active peptide (FSAP) family. Brevinin subfamily. In terms of tissue distribution, expressed by the skin glands.

It localises to the secreted. Antimicrobial peptide. Active against some Gram-negative and a variety of Gram-positive bacterial strains. Active against fungus C.glabrata 090902 but not against C.albicans ATCC 10231. Shows hemolytic activity against human erythrocytes. This chain is Brevinin-2SN2, found in Sylvirana spinulosa (Fine-spined frog).